Reading from the N-terminus, the 641-residue chain is MAKVIGIDLGTTNSCVSVMDGKDAKVIENAEGARTTPSMVAFTEDGERLVGQPAKRQAVTNPENTLFAIKRLIGRTFEDPTTQKDKGMVPYKIVKADNGDAWVEAHDKSYSPSQISAMILQKMKETAESYLGEKVEKAVITVPAYFNDAQRQATKDAGKIAGLDVLRIINEPTAAALAYGLDKKEGKTIAVYDLGGGTFDISVLEIGDGVFEVKSTNGDTFLGGEDFDMRLVEYLASEFKKEQGIDLKNDKLALQRLKEAAEKAKIELSSSQQTEINLPFITADASGPKHLTMKLSRAKFESLVDDLIQKTIAPCKAALKDAGVSAAEIDEVVLVGGMTRMPKVQETVKQLFGKEPHKGVNPDEVVAMGAAIQAGVLQGDVKDVLLLDVTPLSLGIETLGGVFTRLIERNTTIPTKKSQVFSTADDNQSAVTIRVSQGEREMAADNKLLGQFDLVGIPPAPRGVPQIEVTFDIDANGIVQVSAKDKGTGKEHQIRIQASGGLSDAEIEKMVKDAEANAEADKKRREGVEAKNQAESLVHSSEKSLQEHGDKVSETDRKAIEDAIAALKSAVEASEPDAEDIKAKTNTLMEVSMKLGQAIYEAQQTESAHADAAADAKRSGDDVVDADYEEVKDEDDRKRSA.

At threonine 198 the chain carries Phosphothreonine; by autocatalysis. Basic and acidic residues-rich tracts occupy residues alanine 514–glutamate 529, serine 540–glutamate 554, and alanine 608–aspartate 621. Disordered regions lie at residues alanine 514 to glutamate 554 and glutamine 604 to alanine 641. A compositionally biased stretch (acidic residues) spans aspartate 622 to aspartate 633.

Belongs to the heat shock protein 70 family.

Functionally, acts as a chaperone. This is Chaperone protein DnaK from Sinorhizobium medicae (strain WSM419) (Ensifer medicae).